The chain runs to 392 residues: Leucine-rich repeat-containing protein 74B (392 aa).

Positions 24-46 (RLSGVPEAEQGPEANWDSDLETE) are disordered. LRR repeat units lie at residues 106–129 (NPYV…ALAG), 134–157 (SSSI…ALCA), 162–185 (NQAM…HLAE), 192–213 (DLKS…TLGP), 220–241 (GLTE…AFAR), 248–269 (FLKV…AVGE), 276–297 (VLEE…SLGL), 304–325 (TLRI…GLLK), and 334–356 (ALEL…ASSV).

This is Leucine-rich repeat-containing protein 74B from Homo sapiens (Human).